The sequence spans 338 residues: Probable dual-specificity RNA methyltransferase RlmN (338 aa).

Catalysis depends on Glu-89, which acts as the Proton acceptor. In terms of domain architecture, Radical SAM core spans 95-325 (HNYGMSACVT…AILRKEQGHD (231 aa)). A disulfide bond links Cys-102 and Cys-330. [4Fe-4S] cluster contacts are provided by Cys-109, Cys-113, and Cys-116. S-adenosyl-L-methionine is bound by residues 156 to 157 (GE), Ser-188, 211 to 213 (SLH), and Asn-287. Cys-330 acts as the S-methylcysteine intermediate in catalysis.

Belongs to the radical SAM superfamily. RlmN family. It depends on [4Fe-4S] cluster as a cofactor.

The protein resides in the cytoplasm. It catalyses the reaction adenosine(2503) in 23S rRNA + 2 reduced [2Fe-2S]-[ferredoxin] + 2 S-adenosyl-L-methionine = 2-methyladenosine(2503) in 23S rRNA + 5'-deoxyadenosine + L-methionine + 2 oxidized [2Fe-2S]-[ferredoxin] + S-adenosyl-L-homocysteine. It carries out the reaction adenosine(37) in tRNA + 2 reduced [2Fe-2S]-[ferredoxin] + 2 S-adenosyl-L-methionine = 2-methyladenosine(37) in tRNA + 5'-deoxyadenosine + L-methionine + 2 oxidized [2Fe-2S]-[ferredoxin] + S-adenosyl-L-homocysteine. Specifically methylates position 2 of adenine 2503 in 23S rRNA and position 2 of adenine 37 in tRNAs. The polypeptide is Probable dual-specificity RNA methyltransferase RlmN (Acholeplasma laidlawii (strain PG-8A)).